The chain runs to 215 residues: Thiamine import ATP-binding protein ThiQ (215 aa).

Positions 2-215 constitute an ABC transporter domain; that stretch reads IYLNNVILND…GQISQLQKGV (214 aa). Residue 32–39 coordinates ATP; sequence GESGAGKS.

This sequence belongs to the ABC transporter superfamily. Thiamine importer (TC 3.A.1.19.1) family. As to quaternary structure, the complex is composed of two ATP-binding proteins (ThiQ), two transmembrane proteins (ThiP) and a solute-binding protein (ThiB).

It is found in the cell inner membrane. It carries out the reaction thiamine(out) + ATP + H2O = thiamine(in) + ADP + phosphate + H(+). In terms of biological role, part of the ABC transporter complex ThiBPQ involved in thiamine import. Responsible for energy coupling to the transport system. The chain is Thiamine import ATP-binding protein ThiQ from Haemophilus influenzae (strain 86-028NP).